Reading from the N-terminus, the 121-residue chain is Large ribosomal subunit protein uL18 (121 aa).

The protein belongs to the universal ribosomal protein uL18 family. As to quaternary structure, part of the 50S ribosomal subunit; part of the 5S rRNA/L5/L18/L25 subcomplex. Contacts the 5S and 23S rRNAs.

Functionally, this is one of the proteins that bind and probably mediate the attachment of the 5S RNA into the large ribosomal subunit, where it forms part of the central protuberance. In Desulfotalea psychrophila (strain LSv54 / DSM 12343), this protein is Large ribosomal subunit protein uL18.